Reading from the N-terminus, the 358-residue chain is COP9 signalosome complex subunit 5b (358 aa).

Met1 is subject to N-acetylmethionine. In terms of domain architecture, MPN spans 59–196 (VKISALALLK…IGAFRTYSKG (138 aa)). Residues His142, His144, and Asp155 each contribute to the Zn(2+) site. Positions 142 to 155 (HSHPGYGCWLSGID) match the JAMM motif motif. Residues 338-349 (MRQSNNKSPTDS) are compositionally biased toward polar residues. The disordered stretch occupies residues 338–358 (MRQSNNKSPTDSSDPDPMITY).

It belongs to the peptidase M67A family. CSN5 subfamily. In terms of assembly, component of the CSN complex, probably composed of CSN1, CSN2, CSN3, CSN4, CSN5 (CSN5A or CSN5B), CSN6 (CSN6A or CSN6B), CSN7 and CSN8. CSN5A or CSN5B are present within distinct CSN complexes each containing only one copy of CSN5. Interacts with itself. In the complex, it is located in the center and probably interacts directly with CSN4 and CSN6A or CSN6B. Also exists as monomeric form. Interacts with CYT1 in vitro and in planta. Interacts with FLZ3. A divalent metal cation serves as cofactor. As to expression, ubiquitously expressed. Highly expressed in flowers and roots. Expressed at lower level in seedlings and siliques.

Its subcellular location is the cytoplasm. It is found in the nucleus. Functionally, probable protease subunit of the COP9 signalosome complex (CSN), a complex involved in various cellular and developmental processes such as photomorphogenesis and auxin and jasmonate responses. The CSN complex is an essential regulator of the ubiquitin (Ubl) conjugation pathway by mediating the deneddylation of the cullin subunits of the SCF-type E3 ligase complexes, leading to decrease the Ubl ligase activity of SCF. In the complex, it probably acts as the catalytic center that mediates the cleavage of Nedd8 from cullins. It however has no metalloprotease activity by itself and requires the other subunits of the CSN complex. The CSN complex is involved in repression of photomorphogenesis in darkness by regulating the activity of COP1-containing Ubl ligase complexes. The complex is also required for degradation of PSIAA6 by regulating the activity of the Ubl ligase SCF-TIR complex. Not involved in CSN's deneddylation/derubylation activity. Essential for the structural integrity of the CSN holocomplex. In Arabidopsis thaliana (Mouse-ear cress), this protein is COP9 signalosome complex subunit 5b.